The sequence spans 744 residues: MAADKPADQGAEKHEGAGQSSGVTDQEKELSASALQAFTSGNYDACLQHLACLQDINKDDYKIILNTAVAEFFKNNQTTTDNLRQTLNQLKNQVHSAVEEMDGLDDVENSMLYYNQAVILYHLRQYTEAISVGEKLYQFIEPFEEKFAQAVCFLLVDLYILTHQAEKALHLLAVLEKMISQGSGGKNGKNETGNNSSKDGSNPKAESAALIEAAKSKIHQYKVRGYIQMKSLKACKREIKSVMNTAGNSAPSLFLKSNFEYLRGNYRKAVKLLNSSNIAEHPGFMKTGECLRCMFWNNLGCIHFAMSKHNLGIFYFKKALQENDNVCAQLSAGGTDPGKKFSGRPMCTLLTNKRYELLYNCGIQLLHVGRPLAAFECLIEAVQVYHANPRLWLRLAECCIAANKGTSEQETKGLPTKKGIVQSIVGQGYHRKIVLASQSIQNTVYNDGQSSAIPVASVEFAAICLRNALLLLPEEQQDPKQENGSKSSSQLGGNTESSESSETCSSKSHDGDKFIPAPPSSPLRKQELENLKCSILACSAYVALALGDNLMALNHADQLLQQPKLSGSLKFLGHLYAAEALISLDRISDAITHLNPENVTDVSLGISSNEQDQGSDKGENEAMESSGKRAPQCYPSSVNSARTVMLFNLGSAYCLRSEYDKARKCLHQAASMIHPKEVPPEAILLAVYLELQNGNTQLALQMIKRNQLLPAVKAHSDVRKKTVFQPVHPIQPIQMPAFTTVQRK.

The segment covering 1–16 has biased composition (basic and acidic residues); it reads MAADKPADQGAEKHEG. The interval 1 to 26 is disordered; the sequence is MAADKPADQGAEKHEGAGQSSGVTDQ. Position 2 is an N-acetylalanine (A2). Residues 73–107 are a coiled coil; that stretch reads FKNNQTTTDNLRQTLNQLKNQVHSAVEEMDGLDDV. Disordered stretches follow at residues 182–203, 475–521, and 602–634; these read GSGG…GSNP, EQQD…PPSS, and VSLG…PQCY. The span at 484-495 shows a compositional bias: polar residues; sequence GSKSSSQLGGNT. The segment covering 496 to 506 has biased composition (low complexity); sequence ESSESSETCSS. Residues 602-612 are compositionally biased toward polar residues; the sequence is VSLGISSNEQD.

Belongs to the CNOT10 family. Component of the CCR4-NOT complex; distinct complexes seem to exist that differ in the participation of probably mutually exclusive catalytic subunits. CNOT10 and CNOT11 form a subcomplex docked to the CNOT1 scaffold.

The protein resides in the cytoplasm. The protein localises to the nucleus. Functionally, component of the CCR4-NOT complex which is one of the major cellular mRNA deadenylases and is linked to various cellular processes including bulk mRNA degradation, miRNA-mediated repression, translational repression during translational initiation and general transcription regulation. Additional complex functions may be a consequence of its influence on mRNA expression. Is not required for association of CNOT7 to the CCR4-NOT complex. The protein is CCR4-NOT transcription complex subunit 10 (Cnot10) of Mus musculus (Mouse).